The chain runs to 418 residues: Replication factor C large subunit (418 aa).

Residue 47–54 (GSQGTGKT) coordinates ATP.

It belongs to the activator 1 small subunits family. RfcL subfamily. As to quaternary structure, heteromultimer composed of small subunits (RfcS) and large subunits (RfcL).

Part of the RFC clamp loader complex which loads the PCNA sliding clamp onto DNA. The polypeptide is Replication factor C large subunit (Thermoplasma acidophilum (strain ATCC 25905 / DSM 1728 / JCM 9062 / NBRC 15155 / AMRC-C165)).